A 275-amino-acid polypeptide reads, in one-letter code: Ribosomal RNA small subunit methyltransferase A (275 aa).

The S-adenosyl-L-methionine site is built by Asn-20, Leu-22, Gly-47, Glu-68, Asp-90, and Asn-110.

It belongs to the class I-like SAM-binding methyltransferase superfamily. rRNA adenine N(6)-methyltransferase family. RsmA subfamily.

The protein resides in the cytoplasm. The catalysed reaction is adenosine(1518)/adenosine(1519) in 16S rRNA + 4 S-adenosyl-L-methionine = N(6)-dimethyladenosine(1518)/N(6)-dimethyladenosine(1519) in 16S rRNA + 4 S-adenosyl-L-homocysteine + 4 H(+). Functionally, specifically dimethylates two adjacent adenosines (A1518 and A1519) in the loop of a conserved hairpin near the 3'-end of 16S rRNA in the 30S particle. May play a critical role in biogenesis of 30S subunits. The chain is Ribosomal RNA small subunit methyltransferase A from Chlorobaculum tepidum (strain ATCC 49652 / DSM 12025 / NBRC 103806 / TLS) (Chlorobium tepidum).